A 184-amino-acid polypeptide reads, in one-letter code: Glucosamine 6-phosphate N-acetyltransferase (184 aa).

The 146-residue stretch at 39–184 folds into the N-acetyltransferase domain; the sequence is LVLRPLCTAD…ENYMCRRFLK (146 aa). Residues T61, 108-111, and 120-122 contribute to the substrate site; these read KFIH and EDV. Position 130 to 135 (130 to 135) interacts with acetyl-CoA; that stretch reads GKQLGK. 151–152 serves as a coordination point for substrate; that stretch reads YK. Residue 165–167 participates in acetyl-CoA binding; sequence YKK. Positions 175 and 181 each coordinate substrate.

Belongs to the acetyltransferase family. GNA1 subfamily. In terms of assembly, homodimer. As to expression, ubiquitous. Shows a strong differential expression pattern in adult hematopoietic precursor cells.

The protein localises to the golgi apparatus membrane. Its subcellular location is the endosome membrane. The enzyme catalyses D-glucosamine 6-phosphate + acetyl-CoA = N-acetyl-D-glucosamine 6-phosphate + CoA + H(+). It functions in the pathway nucleotide-sugar biosynthesis; UDP-N-acetyl-alpha-D-glucosamine biosynthesis; N-acetyl-alpha-D-glucosamine 1-phosphate from alpha-D-glucosamine 6-phosphate (route I): step 1/2. This chain is Glucosamine 6-phosphate N-acetyltransferase (Gnpnat1), found in Mus musculus (Mouse).